The following is a 221-amino-acid chain: MSANTDEFDVVIIDTGCANLSSVRFAFERLGANVLVTDDKASIKAAKRVVLPGVGSAGAAMASLTEKALVELIQGLTQPVLGVCLGMQMLTLLSKERGGQALDCQAHDCKCLGIIPTEIDELNSQTLKAEGLPLPHMGWNQLTFSNPSQVHPLFAGVEAGSYVYFVHSYRAPLSDYTLAQCRYGEDFSAAIGKDNFMGVQFHPEKSAAVGAQILGNFLKMQ.

A Glutamine amidotransferase type-1 domain is found at 9–221; that stretch reads DVVIIDTGCA…QILGNFLKMQ (213 aa). Cys84 (nucleophile) is an active-site residue. Catalysis depends on residues His202 and Glu204.

As to quaternary structure, heterodimer of HisH and HisF.

The protein localises to the cytoplasm. The enzyme catalyses 5-[(5-phospho-1-deoxy-D-ribulos-1-ylimino)methylamino]-1-(5-phospho-beta-D-ribosyl)imidazole-4-carboxamide + L-glutamine = D-erythro-1-(imidazol-4-yl)glycerol 3-phosphate + 5-amino-1-(5-phospho-beta-D-ribosyl)imidazole-4-carboxamide + L-glutamate + H(+). It catalyses the reaction L-glutamine + H2O = L-glutamate + NH4(+). It participates in amino-acid biosynthesis; L-histidine biosynthesis; L-histidine from 5-phospho-alpha-D-ribose 1-diphosphate: step 5/9. Functionally, IGPS catalyzes the conversion of PRFAR and glutamine to IGP, AICAR and glutamate. The HisH subunit catalyzes the hydrolysis of glutamine to glutamate and ammonia as part of the synthesis of IGP and AICAR. The resulting ammonia molecule is channeled to the active site of HisF. The polypeptide is Imidazole glycerol phosphate synthase subunit HisH (Shewanella oneidensis (strain ATCC 700550 / JCM 31522 / CIP 106686 / LMG 19005 / NCIMB 14063 / MR-1)).